Consider the following 69-residue polypeptide: UPF0437 protein AZC_3451 (69 aa).

It belongs to the UPF0437 family.

The polypeptide is UPF0437 protein AZC_3451 (Azorhizobium caulinodans (strain ATCC 43989 / DSM 5975 / JCM 20966 / LMG 6465 / NBRC 14845 / NCIMB 13405 / ORS 571)).